The following is a 283-amino-acid chain: (+)-O-methylkolavelool synthase (283 aa).

S-adenosyl-L-methionine is bound by residues Gln-106, 129 to 130, and His-151; that span reads NA.

This sequence belongs to the methyltransferase superfamily.

It catalyses the reaction (+)-kolavelool + S-adenosyl-L-methionine = (+)-O-methylkolavelool + S-adenosyl-L-homocysteine + H(+). Its function is as follows. Involved in the biosynthesis of the diterpene (+)-O-methylkolavelool. Catalyzes the transfer of a methyl group from S-adenosyl-L-methionine to the hydroxy group of (+)-kolavelool, forming (+)-O-methylkolavelool. The sequence is that of (+)-O-methylkolavelool synthase from Herpetosiphon aurantiacus (strain ATCC 23779 / DSM 785 / 114-95).